A 534-amino-acid polypeptide reads, in one-letter code: Arginine--tRNA ligase (534 aa).

Residues 120-130 carry the 'HIGH' region motif; it reads ANPTGFLHLGH.

Belongs to the class-I aminoacyl-tRNA synthetase family. Monomer.

The protein resides in the cytoplasm. The catalysed reaction is tRNA(Arg) + L-arginine + ATP = L-arginyl-tRNA(Arg) + AMP + diphosphate. The chain is Arginine--tRNA ligase from Mesomycoplasma hyopneumoniae (strain J / ATCC 25934 / NCTC 10110) (Mycoplasma hyopneumoniae).